The following is a 251-amino-acid chain: Vacuolar protein sorting-associated protein 37D (251 aa).

A VPS37 C-terminal domain is found at 93-182 (AENCADKLQR…RRRERSAQPA (90 aa)). The tract at residues 174 to 251 (RRERSAQPAP…RPSQPEPPHR (78 aa)) is disordered. Over residues 221–251 (PVPPLKGSPGCPLGPAPLLSPRPSQPEPPHR) the composition is skewed to pro residues.

The protein belongs to the VPS37 family. Component of the ESCRT-I complex (endosomal sorting complex required for transport I) which consists of TSG101, VPS28, a VPS37 protein (VPS37A to -D) and MVB12A or MVB12B in a 1:1:1:1 stoichiometry. Interacts with TSG101 and MVB12A. Component of the ESCRT-I complex (endosomal sorting complex required for transport I) which consists of TSG101, VPS28, a VPS37 protein (VPS37A to -D) and UBAP1 in a 1:1:1:1 stoichiometry.

Its subcellular location is the late endosome membrane. In terms of biological role, component of the ESCRT-I complex, a regulator of vesicular trafficking process. Required for the sorting of endocytic ubiquitinated cargos into multivesicular bodies. May be involved in cell growth and differentiation. In Homo sapiens (Human), this protein is Vacuolar protein sorting-associated protein 37D.